The following is a 260-amino-acid chain: Small ribosomal subunit protein eS4 (260 aa).

The S4 RNA-binding domain occupies Val-46–His-111.

The protein belongs to the eukaryotic ribosomal protein eS4 family.

The sequence is that of Small ribosomal subunit protein eS4 from Methanopyrus kandleri (strain AV19 / DSM 6324 / JCM 9639 / NBRC 100938).